Here is a 131-residue protein sequence, read N- to C-terminus: Sulfurtransferase TusD (131 aa).

Catalysis depends on Cys-81, which acts as the Cysteine persulfide intermediate.

Belongs to the DsrE/TusD family. In terms of assembly, heterohexamer, formed by a dimer of trimers. The hexameric TusBCD complex contains 2 copies each of TusB, TusC and TusD. The TusBCD complex interacts with TusE.

The protein resides in the cytoplasm. Functionally, part of a sulfur-relay system required for 2-thiolation of 5-methylaminomethyl-2-thiouridine (mnm(5)s(2)U) at tRNA wobble positions. Accepts sulfur from TusA and transfers it in turn to TusE. In Photorhabdus laumondii subsp. laumondii (strain DSM 15139 / CIP 105565 / TT01) (Photorhabdus luminescens subsp. laumondii), this protein is Sulfurtransferase TusD.